A 537-amino-acid chain; its full sequence is Methylmalonate-semialdehyde/malonate-semialdehyde dehydrogenase [acylating], mitochondrial (537 aa).

The transit peptide at 1–34 (MAAVAVAAAAAALRARILQVSSKVNSSWQPASSF) directs the protein to the mitochondrion. Lys-49, Lys-54, Lys-57, and Lys-78 each carry N6-acetyllysine; alternate. Residues Lys-49, Lys-54, Lys-57, and Lys-78 each carry the N6-succinyllysine; alternate modification. Lys-89 is modified (N6-acetyllysine). Lys-119 and Lys-131 each carry N6-acetyllysine; alternate. Residues Lys-119 and Lys-131 each carry the N6-succinyllysine; alternate modification. Ala-185, Phe-187, Lys-211, Glu-214, Arg-215, and Ser-264 together coordinate NAD(+). The residue at position 264 (Ser-264) is a Phosphoserine. N6-acetyllysine is present on Lys-300. Cys-319 acts as the Nucleophile in catalysis. N6-acetyllysine occurs at positions 332 and 333. Residues Lys-366 and Lys-378 each carry the N6-acetyllysine; alternate modification. 2 positions are modified to N6-succinyllysine; alternate: Lys-366 and Lys-378. The residue at position 382 (Ser-382) is a Phosphoserine. An N6-succinyllysine modification is found at Lys-393. Glu-419 is an NAD(+) binding site. N6-acetyllysine is present on Lys-502. Residue Lys-519 is modified to N6-succinyllysine.

This sequence belongs to the aldehyde dehydrogenase family. In terms of assembly, homodimer. The N-terminus is blocked.

Its subcellular location is the mitochondrion. The catalysed reaction is 2-methyl-3-oxopropanoate + NAD(+) + CoA + H2O = propanoyl-CoA + hydrogencarbonate + NADH + H(+). The enzyme catalyses 3-oxopropanoate + NAD(+) + CoA + H2O = hydrogencarbonate + acetyl-CoA + NADH + H(+). It catalyses the reaction (R)-2-methyl-3-oxopropanoate + NAD(+) + CoA + H2O = propanoyl-CoA + hydrogencarbonate + NADH + H(+). It carries out the reaction (S)-2-methyl-3-oxopropanoate + NAD(+) + CoA + H2O = propanoyl-CoA + hydrogencarbonate + NADH + H(+). Malonate and methylmalonate semialdehyde dehydrogenase involved in the catabolism of valine, thymine, and compounds catabolized by way of beta-alanine, including uracil and cytidine. The protein is Methylmalonate-semialdehyde/malonate-semialdehyde dehydrogenase [acylating], mitochondrial (ALDH6A1) of Bos taurus (Bovine).